Consider the following 403-residue polypeptide: Dual-specificity RNA methyltransferase RlmN (403 aa).

The Proton acceptor role is filled by Glu121. Residues 127-375 (ETDRGTLCVS…VRTPRGRDIL (249 aa)) enclose the Radical SAM core domain. Residues Cys134 and Cys378 are joined by a disulfide bond. Residues Cys141, Cys145, and Cys148 each contribute to the [4Fe-4S] cluster site. S-adenosyl-L-methionine contacts are provided by residues 204-205 (GE), Ser236, 258-260 (SLH), and Asn335. The active-site S-methylcysteine intermediate is the Cys378.

This sequence belongs to the radical SAM superfamily. RlmN family. It depends on [4Fe-4S] cluster as a cofactor.

It localises to the cytoplasm. It catalyses the reaction adenosine(2503) in 23S rRNA + 2 reduced [2Fe-2S]-[ferredoxin] + 2 S-adenosyl-L-methionine = 2-methyladenosine(2503) in 23S rRNA + 5'-deoxyadenosine + L-methionine + 2 oxidized [2Fe-2S]-[ferredoxin] + S-adenosyl-L-homocysteine. It carries out the reaction adenosine(37) in tRNA + 2 reduced [2Fe-2S]-[ferredoxin] + 2 S-adenosyl-L-methionine = 2-methyladenosine(37) in tRNA + 5'-deoxyadenosine + L-methionine + 2 oxidized [2Fe-2S]-[ferredoxin] + S-adenosyl-L-homocysteine. Its function is as follows. Specifically methylates position 2 of adenine 2503 in 23S rRNA and position 2 of adenine 37 in tRNAs. m2A2503 modification seems to play a crucial role in the proofreading step occurring at the peptidyl transferase center and thus would serve to optimize ribosomal fidelity. The protein is Dual-specificity RNA methyltransferase RlmN of Rhodopseudomonas palustris (strain BisA53).